Here is a 357-residue protein sequence, read N- to C-terminus: Peptide chain release factor 1 (357 aa).

Gln-236 is subject to N5-methylglutamine.

The protein belongs to the prokaryotic/mitochondrial release factor family. Methylated by PrmC. Methylation increases the termination efficiency of RF1.

It is found in the cytoplasm. Its function is as follows. Peptide chain release factor 1 directs the termination of translation in response to the peptide chain termination codons UAG and UAA. The protein is Peptide chain release factor 1 of Mycolicibacterium vanbaalenii (strain DSM 7251 / JCM 13017 / BCRC 16820 / KCTC 9966 / NRRL B-24157 / PYR-1) (Mycobacterium vanbaalenii).